We begin with the raw amino-acid sequence, 413 residues long: Eukaryotic initiation factor 4A-10 (413 aa).

The Q motif motif lies at 40–68 (DSFDAMGLQENLLRGIYAYGFEKPSAIQQ). The Helicase ATP-binding domain occupies 71-241 (IVPFCKGLDV…RKFMNKPVRI (171 aa)). 84–91 (AQSGTGKT) is a binding site for ATP. Positions 189–192 (DEAD) match the DEAD box motif. The 162-residue stretch at 252–413 (GIKQFYVNVD…ELPANVADLL (162 aa)) folds into the Helicase C-terminal domain.

This sequence belongs to the DEAD box helicase family. eIF4A subfamily. EIF4F is a multi-subunit complex, the composition of which varies with external and internal environmental conditions. It is composed of at least EIF4A, EIF4E and EIF4G.

The catalysed reaction is ATP + H2O = ADP + phosphate + H(+). ATP-dependent RNA helicase which is a subunit of the eIF4F complex involved in cap recognition and is required for mRNA binding to ribosome. In the current model of translation initiation, eIF4A unwinds RNA secondary structures in the 5'-UTR of mRNAs which is necessary to allow efficient binding of the small ribosomal subunit, and subsequent scanning for the initiator codon. This chain is Eukaryotic initiation factor 4A-10, found in Nicotiana tabacum (Common tobacco).